The primary structure comprises 182 residues: Small ribosomal subunit protein uS4c (182 aa).

The tract at residues 12-31 (PGFTSKRPRSGSDLKNPLRS) is disordered. The 62-residue stretch at 82–143 (MRLDNILFRL…KQRSKALIQN (62 aa)) folds into the S4 RNA-binding domain.

Belongs to the universal ribosomal protein uS4 family. Part of the 30S ribosomal subunit. Contacts protein S5. The interaction surface between S4 and S5 is involved in control of translational fidelity.

It localises to the plastid. The protein localises to the chloroplast. One of the primary rRNA binding proteins, it binds directly to 16S rRNA where it nucleates assembly of the body of the 30S subunit. Functionally, with S5 and S12 plays an important role in translational accuracy. The protein is Small ribosomal subunit protein uS4c (rps4) of Hymenocallis littoralis (Beach spider-lily).